Reading from the N-terminus, the 86-residue chain is Acyl carrier protein (86 aa).

The 81-residue stretch at 2-82 (ATVFERVKKV…AVVDYLKSKG (81 aa)) folds into the Carrier domain. Serine 37 carries the O-(pantetheine 4'-phosphoryl)serine modification.

This sequence belongs to the acyl carrier protein (ACP) family. 4'-phosphopantetheine is transferred from CoA to a specific serine of apo-ACP by AcpS. This modification is essential for activity because fatty acids are bound in thioester linkage to the sulfhydryl of the prosthetic group.

The protein localises to the cytoplasm. It functions in the pathway lipid metabolism; fatty acid biosynthesis. Carrier of the growing fatty acid chain in fatty acid biosynthesis. This Dehalococcoides mccartyi (strain ATCC BAA-2100 / JCM 16839 / KCTC 5957 / BAV1) protein is Acyl carrier protein.